Consider the following 921-residue polypeptide: Protein translocase subunit SecA (921 aa).

Residues Gln87, 105-109, and Asp516 each bind ATP; that span reads GEGKT. 4 residues coordinate Zn(2+): Cys905, Cys907, Cys916, and His917.

This sequence belongs to the SecA family. Monomer and homodimer. Part of the essential Sec protein translocation apparatus which comprises SecA, SecYEG and auxiliary proteins SecDF-YajC and YidC. Zn(2+) serves as cofactor.

The protein resides in the cell inner membrane. The protein localises to the cytoplasm. It catalyses the reaction ATP + H2O + cellular proteinSide 1 = ADP + phosphate + cellular proteinSide 2.. Functionally, part of the Sec protein translocase complex. Interacts with the SecYEG preprotein conducting channel. Has a central role in coupling the hydrolysis of ATP to the transfer of proteins into and across the cell membrane, serving both as a receptor for the preprotein-SecB complex and as an ATP-driven molecular motor driving the stepwise translocation of polypeptide chains across the membrane. This is Protein translocase subunit SecA from Albidiferax ferrireducens (strain ATCC BAA-621 / DSM 15236 / T118) (Rhodoferax ferrireducens).